We begin with the raw amino-acid sequence, 264 residues long: Thymidylate synthase (264 aa).

Arg21 provides a ligand contact to dUMP. Residue His51 participates in (6R)-5,10-methylene-5,6,7,8-tetrahydrofolate binding. Residue 126-127 (RR) coordinates dUMP. Residue Cys146 is the Nucleophile of the active site. Residues 166–169 (RSAD), Asn177, and 207–209 (HIY) contribute to the dUMP site. Asp169 provides a ligand contact to (6R)-5,10-methylene-5,6,7,8-tetrahydrofolate. Residue Ala263 participates in (6R)-5,10-methylene-5,6,7,8-tetrahydrofolate binding.

Belongs to the thymidylate synthase family. Bacterial-type ThyA subfamily. Homodimer.

It is found in the cytoplasm. The enzyme catalyses dUMP + (6R)-5,10-methylene-5,6,7,8-tetrahydrofolate = 7,8-dihydrofolate + dTMP. The protein operates within pyrimidine metabolism; dTTP biosynthesis. Catalyzes the reductive methylation of 2'-deoxyuridine-5'-monophosphate (dUMP) to 2'-deoxythymidine-5'-monophosphate (dTMP) while utilizing 5,10-methylenetetrahydrofolate (mTHF) as the methyl donor and reductant in the reaction, yielding dihydrofolate (DHF) as a by-product. This enzymatic reaction provides an intracellular de novo source of dTMP, an essential precursor for DNA biosynthesis. This Brucella ovis (strain ATCC 25840 / 63/290 / NCTC 10512) protein is Thymidylate synthase.